We begin with the raw amino-acid sequence, 293 residues long: Indole-3-glycerol phosphate synthase (293 aa).

It belongs to the TrpC family.

The catalysed reaction is 1-(2-carboxyphenylamino)-1-deoxy-D-ribulose 5-phosphate + H(+) = (1S,2R)-1-C-(indol-3-yl)glycerol 3-phosphate + CO2 + H2O. The protein operates within amino-acid biosynthesis; L-tryptophan biosynthesis; L-tryptophan from chorismate: step 4/5. The polypeptide is Indole-3-glycerol phosphate synthase (Prochlorococcus marinus (strain SARG / CCMP1375 / SS120)).